The following is a 187-amino-acid chain: MKINGNEIRPGNVIEHEGGLWAAVKVQHVKPGKGGAFAQVELKNLVDGRKLNERFRSAETVERVRLEQKDYQYLYENDGMLTFMDNETYEQIELSREWVGDRAAFLQDGMKVTVESHEGKALGISLPDQVVLEITETEPTVKGQTATSSYKPALLENGVRVMVPPFITTGERIVVDTNEVTYLRRAD.

This sequence belongs to the elongation factor P family.

It is found in the cytoplasm. It participates in protein biosynthesis; polypeptide chain elongation. Involved in peptide bond synthesis. Stimulates efficient translation and peptide-bond synthesis on native or reconstituted 70S ribosomes in vitro. Probably functions indirectly by altering the affinity of the ribosome for aminoacyl-tRNA, thus increasing their reactivity as acceptors for peptidyl transferase. In Parvibaculum lavamentivorans (strain DS-1 / DSM 13023 / NCIMB 13966), this protein is Elongation factor P.